Here is a 321-residue protein sequence, read N- to C-terminus: MNRPERLQPGVKLRDAEKVSRIPVKVVPSERETMLRKPDWLRVKLPASNQRITDIKQALRKNGLHSVCEEASCPNLSECFNHGTATFMILGAICTRRCPFCDVAHGRPLKPDAEEPKKLAQTIKDMKLKYVVITSVDRDDLRDGGAQHFADCIREIRLLNPEIKIETLVPDFRGRIDAALDILATEPPDVFNHNLETAPMHYRKARPGANYQWSLDLLKKFKERHPDIPTKSGLMMGLGESNEEIAQVLYDLRAHNVEMLTLGQYLQPSKFHLAVERYVSPAEFDELKELAESIGFTHAACGPLVRSSYHADLQAQGKEVR.

[4Fe-4S] cluster is bound by residues C68, C73, C79, C94, C98, C101, and S308. The region spanning 80–297 (FNHGTATFMI…KELAESIGFT (218 aa)) is the Radical SAM core domain.

It belongs to the radical SAM superfamily. Lipoyl synthase family. The cofactor is [4Fe-4S] cluster.

It is found in the cytoplasm. It catalyses the reaction [[Fe-S] cluster scaffold protein carrying a second [4Fe-4S](2+) cluster] + N(6)-octanoyl-L-lysyl-[protein] + 2 oxidized [2Fe-2S]-[ferredoxin] + 2 S-adenosyl-L-methionine + 4 H(+) = [[Fe-S] cluster scaffold protein] + N(6)-[(R)-dihydrolipoyl]-L-lysyl-[protein] + 4 Fe(3+) + 2 hydrogen sulfide + 2 5'-deoxyadenosine + 2 L-methionine + 2 reduced [2Fe-2S]-[ferredoxin]. Its pathway is protein modification; protein lipoylation via endogenous pathway; protein N(6)-(lipoyl)lysine from octanoyl-[acyl-carrier-protein]: step 2/2. In terms of biological role, catalyzes the radical-mediated insertion of two sulfur atoms into the C-6 and C-8 positions of the octanoyl moiety bound to the lipoyl domains of lipoate-dependent enzymes, thereby converting the octanoylated domains into lipoylated derivatives. The polypeptide is Lipoyl synthase (Shewanella halifaxensis (strain HAW-EB4)).